A 162-amino-acid chain; its full sequence is 2-C-methyl-D-erythritol 2,4-cyclodiphosphate synthase (162 aa).

Asp-12 and His-14 together coordinate a divalent metal cation. Residues 12–14 (DVH) and 38–39 (HS) contribute to the 4-CDP-2-C-methyl-D-erythritol 2-phosphate site. His-46 is a binding site for a divalent metal cation. Residues 60-62 (DIG), 65-69 (FPDTD), and Arg-146 contribute to the 4-CDP-2-C-methyl-D-erythritol 2-phosphate site.

It belongs to the IspF family. As to quaternary structure, homotrimer. It depends on a divalent metal cation as a cofactor.

The enzyme catalyses 4-CDP-2-C-methyl-D-erythritol 2-phosphate = 2-C-methyl-D-erythritol 2,4-cyclic diphosphate + CMP. The protein operates within isoprenoid biosynthesis; isopentenyl diphosphate biosynthesis via DXP pathway; isopentenyl diphosphate from 1-deoxy-D-xylulose 5-phosphate: step 4/6. Involved in the biosynthesis of isopentenyl diphosphate (IPP) and dimethylallyl diphosphate (DMAPP), two major building blocks of isoprenoid compounds. Catalyzes the conversion of 4-diphosphocytidyl-2-C-methyl-D-erythritol 2-phosphate (CDP-ME2P) to 2-C-methyl-D-erythritol 2,4-cyclodiphosphate (ME-CPP) with a corresponding release of cytidine 5-monophosphate (CMP). This chain is 2-C-methyl-D-erythritol 2,4-cyclodiphosphate synthase, found in Bordetella petrii (strain ATCC BAA-461 / DSM 12804 / CCUG 43448).